A 348-amino-acid polypeptide reads, in one-letter code: Phosphatidylinositol 3,4,5-trisphosphate 3-phosphatase ptn1 (348 aa).

A Phosphatase tensin-type domain is found at 18-189; that stretch reads EKVNRSFAYL…YYIEILKQFP (172 aa). The active-site Phosphocysteine intermediate is Cys129.

The protein localises to the cytoplasmic vesicle. It catalyses the reaction a 1,2-diacyl-sn-glycero-3-phospho-(1D-myo-inositol-3,4,5-trisphosphate) + H2O = a 1,2-diacyl-sn-glycero-3-phospho-(1D-myo-inositol-4,5-bisphosphate) + phosphate. It carries out the reaction 1,2-dioctanoyl-sn-glycero-3-phospho-(1D-myo-inositol-3,4,5-trisphosphate) + H2O = 1,2-dioctanoyl-sn-glycero-3-phospho-(1D-myo-inositol-4,5-bisphosphate) + phosphate. The catalysed reaction is 1,2-dihexadecanoyl-sn-glycero-3-phospho-(1D-myo-inositol-3,4,5-trisphosphate) + H2O = 1,2-dihexadecanoyl-sn-glycero-3-phospho-(1D-myo-inositol-4,5-bisphosphate) + phosphate. Its function is as follows. Acts as a phosphoinositide 3-phosphatase and regulates PtdIns(3,4,5)P3 levels. This chain is Phosphatidylinositol 3,4,5-trisphosphate 3-phosphatase ptn1 (ptn1), found in Schizosaccharomyces pombe (strain 972 / ATCC 24843) (Fission yeast).